The sequence spans 200 residues: Small ribosomal subunit protein uS5 (200 aa).

The segment covering 1-12 (MGRPRTSQTRGQ) has biased composition (polar residues). The interval 1 to 49 (MGRPRTSQTRGQGPSGATGGNPRGGGSTTRERDARGARPGERDGGSEIQ) is disordered. Residues 13-27 (GPSGATGGNPRGGGS) are compositionally biased toward gly residues. Positions 29 to 49 (TRERDARGARPGERDGGSEIQ) are enriched in basic and acidic residues. The region spanning 48 to 111 (IQDRVVQIRR…EKARHAMFDV (64 aa)) is the S5 DRBM domain.

The protein belongs to the universal ribosomal protein uS5 family. Part of the 30S ribosomal subunit. Contacts proteins S4 and S8.

With S4 and S12 plays an important role in translational accuracy. Functionally, located at the back of the 30S subunit body where it stabilizes the conformation of the head with respect to the body. The sequence is that of Small ribosomal subunit protein uS5 from Rubrobacter xylanophilus (strain DSM 9941 / JCM 11954 / NBRC 16129 / PRD-1).